Consider the following 156-residue polypeptide: Small ribosomal subunit protein uS7 (156 aa).

The protein belongs to the universal ribosomal protein uS7 family. Part of the 30S ribosomal subunit. Contacts proteins S9 and S11.

Functionally, one of the primary rRNA binding proteins, it binds directly to 16S rRNA where it nucleates assembly of the head domain of the 30S subunit. Is located at the subunit interface close to the decoding center, probably blocks exit of the E-site tRNA. The polypeptide is Small ribosomal subunit protein uS7 (Aromatoleum aromaticum (strain DSM 19018 / LMG 30748 / EbN1) (Azoarcus sp. (strain EbN1))).